The chain runs to 323 residues: Lipid A biosynthesis acyltransferase 1 (323 aa).

The chain crosses the membrane as a helical span at residues 23 to 43; that stretch reads YWGAWLGVAAMAGIALTPPKF. Residues 139 to 144 carry the HXXXXD motif motif; that stretch reads HGWAVD.

It belongs to the LpxL/LpxM/LpxP family. LpxM subfamily.

The protein resides in the cell inner membrane. The catalysed reaction is an alpha-Kdo-(2-&gt;4)-alpha-Kdo-(2-&gt;6)-(acyl)-lipid IVA + a fatty acyl-[ACP] = an alpha-Kdo-(2-&gt;4)-alpha-Kdo-(2-&gt;6)-lipid A + holo-[ACP]. The protein operates within glycolipid biosynthesis; KDO(2)-lipid A biosynthesis; KDO(2)-lipid A from CMP-3-deoxy-D-manno-octulosonate and lipid IV(A): step 4/4. Its pathway is bacterial outer membrane biogenesis; lipopolysaccharide biosynthesis. Catalyzes the transfer of an acyl chain from an acyl-[acyl-carrier-protein] (ACP) to a Kdo(2)-(acyl)-lipid IV(A) to form a Kdo(2)-lipid A. The chain is Lipid A biosynthesis acyltransferase 1 from Shigella flexneri.